The chain runs to 177 residues: MEVSRYLCSYLISFLLFLFHSETACHPLGKRPCRMQAFRIWDVNQKTFYLRNNQLVAGYLQGPNTKLEEKIDVVPVEPHFVFLGIHGGKLCLSCVKSGDEMKLQLDAVNITDLRKNSEQDKRFTFIRSDSGPTTSFESAACPGWFLCTALEADQPVGLTNTPKAAVKVTKFYFQQDQ.

The signal sequence occupies residues 1–25 (MEVSRYLCSYLISFLLFLFHSETAC). A disulfide bridge connects residues Cys-91 and Cys-141. Asn-109 carries N-linked (GlcNAc...) asparagine glycosylation.

It belongs to the IL-1 family.

The protein resides in the secreted. Anti-inflammatory antagonist of interleukin-1 family of proinflammatory cytokines such as interleukin-1beta/IL1B and interleukin-1alpha/IL1A. Protects from immune dysregulation and uncontrolled systemic inflammation triggered by IL1 for a range of innate stimulatory agents such as pathogens. This Sus scrofa (Pig) protein is Interleukin-1 receptor antagonist protein (IL1RN).